The chain runs to 306 residues: tRNA dimethylallyltransferase 1 (306 aa).

15–22 (GPTGSGKS) is an ATP binding site. Substrate is bound at residue 17–22 (TGSGKS). The tract at residues 40 to 43 (DSMQ) is interaction with substrate tRNA.

This sequence belongs to the IPP transferase family. As to quaternary structure, monomer. Requires Mg(2+) as cofactor.

It catalyses the reaction adenosine(37) in tRNA + dimethylallyl diphosphate = N(6)-dimethylallyladenosine(37) in tRNA + diphosphate. Functionally, catalyzes the transfer of a dimethylallyl group onto the adenine at position 37 in tRNAs that read codons beginning with uridine, leading to the formation of N6-(dimethylallyl)adenosine (i(6)A). In Citrifermentans bemidjiense (strain ATCC BAA-1014 / DSM 16622 / JCM 12645 / Bem) (Geobacter bemidjiensis), this protein is tRNA dimethylallyltransferase 1.